A 273-amino-acid chain; its full sequence is Dermonecrotic toxin SdSicTox-betaIIB1aiii (273 aa).

H4 is a catalytic residue. E24 and D26 together coordinate Mg(2+). H40 functions as the Nucleophile in the catalytic mechanism. Disulfide bonds link C44-C50 and C46-C189. Position 84 (D84) interacts with Mg(2+).

This sequence belongs to the arthropod phospholipase D family. Class II subfamily. Mg(2+) serves as cofactor. In terms of tissue distribution, expressed by the venom gland.

Its subcellular location is the secreted. It catalyses the reaction an N-(acyl)-sphingosylphosphocholine = an N-(acyl)-sphingosyl-1,3-cyclic phosphate + choline. The catalysed reaction is an N-(acyl)-sphingosylphosphoethanolamine = an N-(acyl)-sphingosyl-1,3-cyclic phosphate + ethanolamine. It carries out the reaction a 1-acyl-sn-glycero-3-phosphocholine = a 1-acyl-sn-glycero-2,3-cyclic phosphate + choline. The enzyme catalyses a 1-acyl-sn-glycero-3-phosphoethanolamine = a 1-acyl-sn-glycero-2,3-cyclic phosphate + ethanolamine. Dermonecrotic toxins cleave the phosphodiester linkage between the phosphate and headgroup of certain phospholipids (sphingolipid and lysolipid substrates), forming an alcohol (often choline) and a cyclic phosphate. This toxin acts on sphingomyelin (SM). It may also act on ceramide phosphoethanolamine (CPE), lysophosphatidylcholine (LPC) and lysophosphatidylethanolamine (LPE), but not on lysophosphatidylserine (LPS), and lysophosphatidylglycerol (LPG). It acts by transphosphatidylation, releasing exclusively cyclic phosphate products as second products. Induces dermonecrosis, hemolysis, increased vascular permeability, edema, inflammatory response, and platelet aggregation. The protein is Dermonecrotic toxin SdSicTox-betaIIB1aiii of Sicarius cf. damarensis (strain GJB-2008) (Six-eyed sand spider).